The following is a 366-amino-acid chain: Ferredoxin--NADP reductase (366 aa).

FAD-binding residues include Asp51, Gln59, Tyr64, Val104, Phe139, Asp308, and Thr349.

Belongs to the ferredoxin--NADP reductase type 2 family. As to quaternary structure, homodimer. The cofactor is FAD.

It catalyses the reaction 2 reduced [2Fe-2S]-[ferredoxin] + NADP(+) + H(+) = 2 oxidized [2Fe-2S]-[ferredoxin] + NADPH. In Polaromonas naphthalenivorans (strain CJ2), this protein is Ferredoxin--NADP reductase.